Consider the following 179-residue polypeptide: Large ribosomal subunit protein uL5 (179 aa).

Lysine 3 is subject to N6-acetyllysine.

Belongs to the universal ribosomal protein uL5 family. As to quaternary structure, part of the 50S ribosomal subunit; part of the 5S rRNA/L5/L18/L25 subcomplex. Contacts the 5S rRNA and the P site tRNA. Forms a bridge to the 30S subunit in the 70S ribosome.

Its function is as follows. This is one of the proteins that bind and probably mediate the attachment of the 5S RNA into the large ribosomal subunit, where it forms part of the central protuberance. In the 70S ribosome it contacts protein S13 of the 30S subunit (bridge B1b), connecting the 2 subunits; this bridge is implicated in subunit movement. Contacts the P site tRNA; the 5S rRNA and some of its associated proteins might help stabilize positioning of ribosome-bound tRNAs. The sequence is that of Large ribosomal subunit protein uL5 from Shigella flexneri.